A 375-amino-acid chain; its full sequence is Aminomethyltransferase (375 aa).

The protein belongs to the GcvT family. The glycine cleavage system is composed of four proteins: P, T, L and H.

It carries out the reaction N(6)-[(R)-S(8)-aminomethyldihydrolipoyl]-L-lysyl-[protein] + (6S)-5,6,7,8-tetrahydrofolate = N(6)-[(R)-dihydrolipoyl]-L-lysyl-[protein] + (6R)-5,10-methylene-5,6,7,8-tetrahydrofolate + NH4(+). Functionally, the glycine cleavage system catalyzes the degradation of glycine. This is Aminomethyltransferase from Ralstonia nicotianae (strain ATCC BAA-1114 / GMI1000) (Ralstonia solanacearum).